Here is a 563-residue protein sequence, read N- to C-terminus: MGPRSGLLGLFALFVAGKCSYSPEPDQQRRLPPGWVSLGRADPEEELSLTFALRQQNVKRLSELVQAVSDPGSPRYGKYLTLEDVAELVRPSPLTLHTVQKWLLAAGARNCHSVTTQDFLTCWLSVRQAELLLSGAEFHHYVGGPAETHAVRSLHPYRLPKALAPHVDFVGGLHRFPPTSTLRQHPEPQVPGTVGLHLGVTPSVIRKRYNLTAQDVGSGTTNNSQACAQFLEQYFHDSDLAEFMRLFGGDFAHQASVARVVGQQGRGRAGIEASLDVEYLMSAGANISTWVYSSPGRHESQEPFLQWLLLLSNESALPYVHTVSYGDDEDSLSSTYIQRVNTELMKAAARGLTLLFASGDSGAGCWSVSGRHQFRPSFPASSPYVTTVGGTSFQNPFRVTDEVVDYISGGGFSNVFPRPSYQEEAVTRYLSSSPHLPPSSYFNASGRAYPDVAALSDGYWVVSNHVPIPWVSGTSASTPVFGGLLSLINEHRILRGLPPLGFLNPRLYQKHGAGLFDVTRGCHESCLNEEVEGQGFCSGPGWDPVTGWGTPNFPALLKTLMNP.

Residues 1–19 (MGPRSGLLGLFALFVAGKC) form the signal peptide. Positions 20–195 (SYSPEPDQQR…PEPQVPGTVG (176 aa)) are cleaved as a propeptide — removed in mature form. Cys-111 and Cys-122 are joined by a disulfide. The Peptidase S53 domain occupies 199-563 (GVTPSVIRKR…PALLKTLMNP (365 aa)). Asn-210 and Asn-222 each carry an N-linked (GlcNAc...) asparagine glycan. Active-site charge relay system residues include Glu-272 and Asp-276. Asn-286, Asn-313, and Asn-443 each carry an N-linked (GlcNAc...) asparagine glycan. Cystine bridges form between Cys-365–Cys-526 and Cys-522–Cys-537. Catalysis depends on Ser-475, which acts as the Charge relay system. Ca(2+) contacts are provided by Asp-517 and Val-518. Ca(2+) is bound by residues Gly-539, Gly-541, and Asp-543.

Monomer. Interacts with CLN5. Interacts with CLN3. Requires Ca(2+) as cofactor. In terms of processing, activated by autocatalytic proteolytical processing upon acidification. N-glycosylation is required for processing and activity.

The protein resides in the lysosome. It localises to the melanosome. The catalysed reaction is Release of an N-terminal tripeptide from a polypeptide, but also has endopeptidase activity.. In terms of biological role, lysosomal serine protease with tripeptidyl-peptidase I activity. May act as a non-specific lysosomal peptidase which generates tripeptides from the breakdown products produced by lysosomal proteinases. Requires substrates with an unsubstituted N-terminus. The polypeptide is Tripeptidyl-peptidase 1 (TPP1) (Bos taurus (Bovine)).